Here is a 738-residue protein sequence, read N- to C-terminus: Propionyl-CoA carboxylase alpha chain, mitochondrial (738 aa).

Positions 62–509 (KFDKILIANR…TTKYLPEVYP (448 aa)) constitute a Biotin carboxylation domain. Residues K177, 209–270 (SREI…PRHI), E261, and N296 contribute to the ATP site. The ATP-grasp domain occupies 181–378 (KKIATAARVS…IVQQMLRVAY (198 aa)). 3 residues coordinate Mg(2+): E336, E349, and N351. 3 residues coordinate Mn(2+): E336, E349, and N351. The active site involves R353. Residue F409 coordinates biotin. Residues 663–738 (KAKVDLSTVV…DEGEVLVELE (76 aa)) form the Biotinyl-binding domain. K704 is modified (N6-biotinyllysine).

In terms of assembly, the holoenzyme is a dodecamer composed of 6 alpha subunits and 6 beta subunits. Interacts with sir-2.2. Requires biotin as cofactor. Mg(2+) is required as a cofactor. It depends on Mn(2+) as a cofactor. Post-translationally, the biotin cofactor is covalently attached to the C-terminal biotinyl-binding domain and is required for the catalytic activity.

Its subcellular location is the mitochondrion matrix. It catalyses the reaction propanoyl-CoA + hydrogencarbonate + ATP = (S)-methylmalonyl-CoA + ADP + phosphate + H(+). It carries out the reaction butanoyl-CoA + hydrogencarbonate + ATP = (2S)-ethylmalonyl-CoA + ADP + phosphate + H(+). The protein operates within metabolic intermediate metabolism; propanoyl-CoA degradation; succinyl-CoA from propanoyl-CoA: step 1/3. Functionally, this is one of the 2 subunits of the biotin-dependent propionyl-CoA carboxylase (PCC), a mitochondrial enzyme involved in the catabolism of odd chain fatty acids, branched-chain amino acids isoleucine, threonine, methionine, and valine and other metabolites. Propionyl-CoA carboxylase catalyzes the carboxylation of propionyl-CoA/propanoyl-CoA to D-methylmalonyl-CoA/(S)-methylmalonyl-CoA. Within the holoenzyme, the alpha subunit catalyzes the ATP-dependent carboxylation of the biotin carried by the biotin carboxyl carrier (BCC) domain, while the beta subunit then transfers the carboxyl group from carboxylated biotin to propionyl-CoA. Propionyl-CoA carboxylase also significantly acts on butyryl-CoA/butanoyl-CoA, which is converted to ethylmalonyl-CoA/(2S)-ethylmalonyl-CoA. Other alternative minor substrates include (2E)-butenoyl-CoA/crotonoyl-CoA. The chain is Propionyl-CoA carboxylase alpha chain, mitochondrial (pcca-1) from Caenorhabditis briggsae.